The primary structure comprises 398 residues: Arylacetamide deacetylase (398 aa).

The Cytoplasmic portion of the chain corresponds to 1–4 (GVKT). A helical; Signal-anchor for type II membrane protein membrane pass occupies residues 5-22 (VLLLIVGVLGAYYVYTPL). The Lumenal segment spans residues 23-398 (PDNIEEPWRL…QYFEWLRENV (376 aa)). N-linked (GlcNAc...) asparagine glycosylation is present at N77. Residues 110–112 (HGG) carry the Involved in the stabilization of the negatively charged intermediate by the formation of the oxyanion hole motif. The cysteines at positions 115 and 339 are disulfide-linked. S188 is a catalytic residue. The N-linked (GlcNAc...) asparagine glycan is linked to N281. Residues D342 and H372 contribute to the active site.

Belongs to the 'GDXG' lipolytic enzyme family. Post-translationally, glycosylated.

It is found in the endoplasmic reticulum membrane. The protein localises to the microsome membrane. The enzyme catalyses a triacylglycerol + H2O = a diacylglycerol + a fatty acid + H(+). With respect to regulation, inhibited by diisopropylphosphofluoridate (DFP). Displays cellular triglyceride lipase activity in liver, increases the levels of intracellular fatty acids derived from the hydrolysis of newly formed triglyceride stores and plays a role in very low-density lipoprotein assembly. Displays serine esterase activity in liver. Deacetylates a variety of arylacetamide substrates, including xenobiotic compounds and procarcinogens, converting them to the primary arylamide compounds and increasing their toxicity. In Oryctolagus cuniculus (Rabbit), this protein is Arylacetamide deacetylase.